A 294-amino-acid polypeptide reads, in one-letter code: Putative ribose uptake protein RbsU (294 aa).

The next 10 membrane-spanning stretches (helical) occupy residues 2–24 (NAVN…VIVG), 34–56 (ILGT…GTPI), 63–82 (IFCL…TFHV), 92–114 (MPIT…LGNW), 121–140 (LIGF…TAWS), 150–172 (GAVK…SAFP), 179–198 (GFQG…IIFG), 218–235 (IFSG…LISA), 242–264 (LATG…IYIL), and 274–293 (IAVM…TAFI).

This sequence belongs to the GRP transporter (TC 2.A.7.5) family.

It is found in the cell membrane. In terms of biological role, could be involved in the uptake of ribose. This Latilactobacillus sakei subsp. sakei (strain 23K) (Lactobacillus sakei subsp. sakei) protein is Putative ribose uptake protein RbsU (rbsU).